The chain runs to 506 residues: Galactose/methyl galactoside import ATP-binding protein MglA (506 aa).

ABC transporter domains lie at 14–249 (LEMS…VGRS) and 264–506 (VILE…SLHL). Position 46–53 (46–53 (GENGAGKS)) interacts with ATP.

It belongs to the ABC transporter superfamily. Galactose/methyl galactoside importer (TC 3.A.1.2.3) family. As to quaternary structure, the complex is composed of one ATP-binding protein (MglA), two transmembrane proteins (MglC) and a solute-binding protein (MglB).

The protein localises to the cell inner membrane. It catalyses the reaction D-galactose(out) + ATP + H2O = D-galactose(in) + ADP + phosphate + H(+). The enzyme catalyses methyl beta-D-galactoside(out) + ATP + H2O = methyl beta-D-galactoside(in) + ADP + phosphate + H(+). In terms of biological role, part of the ABC transporter complex MglABC involved in galactose/methyl galactoside import. Responsible for energy coupling to the transport system. The chain is Galactose/methyl galactoside import ATP-binding protein MglA from Escherichia coli (strain K12).